A 225-amino-acid polypeptide reads, in one-letter code: Cyanamide hydratase DDI2 (225 aa).

The 111-residue stretch at 52–162 (VLNHSLRVFQ…LQIATTLDNV (111 aa)) folds into the HD domain.

It belongs to the cyanamide dehydrase family. As to quaternary structure, homohexamer. Requires Zn(2+) as cofactor.

It carries out the reaction urea = cyanamide + H2O. In terms of biological role, cyanamide hydratase involved in the detoxification and/or utilization of cyanamide, a toxic nitrile compound distributed widely in the environment. The polypeptide is Cyanamide hydratase DDI2 (Saccharomyces cerevisiae (strain ATCC 204508 / S288c) (Baker's yeast)).